Consider the following 247-residue polypeptide: Probable transcriptional regulatory protein ABO_0750 (247 aa).

This sequence belongs to the TACO1 family.

The protein resides in the cytoplasm. The protein is Probable transcriptional regulatory protein ABO_0750 of Alcanivorax borkumensis (strain ATCC 700651 / DSM 11573 / NCIMB 13689 / SK2).